A 131-amino-acid chain; its full sequence is Small ribosomal subunit protein uS10m (131 aa).

It belongs to the universal ribosomal protein uS10 family.

Its subcellular location is the mitochondrion. The protein is Small ribosomal subunit protein uS10m (mrps10) of Dictyostelium discoideum (Social amoeba).